The sequence spans 343 residues: UPF0157 protein YqkA (343 aa).

Residues 8–144 (KEATIAREIL…VKAAQGLLLS (137 aa)) form the N-acetyltransferase domain. Residues 135–343 (VKAAQGLLLS…ENDENGGFTL (209 aa)) form a UPF0157 region.

This sequence in the C-terminal section; belongs to the UPF0157 (GrpB) family.

This is UPF0157 protein YqkA (yqkA) from Bacillus subtilis (strain 168).